The sequence spans 179 residues: Interleukin-22 (179 aa).

The N-terminal stretch at 1-33 (MAVLQKSMSFSLMGTLAASCLLLIALWAQEANA) is a signal peptide. 2 disulfides stabilise this stretch: Cys-40-Cys-132 and Cys-89-Cys-178. N-linked (GlcNAc...) asparagine glycans are attached at residues Asn-54, Asn-68, and Asn-97.

Belongs to the IL-10 family.

It is found in the secreted. Functionally, cytokine that plays a critical role in modulating tissue responses during inflammation. Plays an essential role in the regeneration of epithelial cells to maintain barrier function after injury and for the prevention of further tissue damage. Unlike most of the cytokines, has no effect on immune cells. Signals through a heterodimeric receptor composed of two subunits, the specific receptor IL22RA1 which is present on non-immune cells in many organs and the shared subunit IL10RB. Ligation of IL22RA1 with IL22 induces activation of the tyrosine kinases JAK1 and TYK2, which in turn activates STAT3. In turn, promotes cell survival and proliferation through STAT3, ERK1/2 and PI3K/AKT pathways. Promotes phosphorylation of GSK3B at 'Ser-9' and CTTN. Promotes epithelial cell spreading. In Mus musculus (Mouse), this protein is Interleukin-22 (Il22).